The sequence spans 129 residues: MAKQVRKASKKTKLKVPSGVAHVQATFNNTIITITNPAGDVLAWCSAGASGFKGARKSTPFAAKIAAETAARKSMDYGLRQISVIIKGAGSGRESAIRGLSEAGLEIKLLRDITSIPHNGCRPPKKRRV.

The protein belongs to the universal ribosomal protein uS11 family. As to quaternary structure, part of the 30S ribosomal subunit.

It localises to the plastid. It is found in the chloroplast. The sequence is that of Small ribosomal subunit protein uS11c from Oltmannsiellopsis viridis (Marine flagellate).